The sequence spans 121 residues: Large ribosomal subunit protein bL12 (121 aa).

This sequence belongs to the bacterial ribosomal protein bL12 family. In terms of assembly, homodimer. Part of the ribosomal stalk of the 50S ribosomal subunit. Forms a multimeric L10(L12)X complex, where L10 forms an elongated spine to which 2 to 4 L12 dimers bind in a sequential fashion. Binds GTP-bound translation factors.

Its function is as follows. Forms part of the ribosomal stalk which helps the ribosome interact with GTP-bound translation factors. Is thus essential for accurate translation. This chain is Large ribosomal subunit protein bL12, found in Vibrio atlanticus (strain LGP32) (Vibrio splendidus (strain Mel32)).